Consider the following 524-residue polypeptide: mRNA cap guanine-N(7) methyltransferase (524 aa).

Positions 1–155 (MSDKEAGVAS…DKKRAHDEAE (155 aa)) are disordered. Residues 19-40 (NKDEVDVKNTEEHSKQESKSDI) show a composition bias toward basic and acidic residues. Residues 68 to 77 (NNKVISSVYN) show a composition bias toward polar residues. Positions 90-99 (KTTDKYDKYG) are enriched in basic and acidic residues. The segment covering 100–112 (SRSTPIATPTAPV) has biased composition (polar residues). The mRNA cap 0 methyltransferase domain occupies 214–522 (SPIYKLRNFN…FYIGFVFEKL (309 aa)). 223–224 (NN) is a binding site for mRNA. Residues K227, C251, D273, D319, Q349, and Y354 each contribute to the S-adenosyl-L-methionine site.

This sequence belongs to the class I-like SAM-binding methyltransferase superfamily. mRNA cap 0 methyltransferase family.

The protein localises to the nucleus. The catalysed reaction is a 5'-end (5'-triphosphoguanosine)-ribonucleoside in mRNA + S-adenosyl-L-methionine = a 5'-end (N(7)-methyl 5'-triphosphoguanosine)-ribonucleoside in mRNA + S-adenosyl-L-homocysteine. In terms of biological role, responsible for methylating the 5'-cap structure of mRNAs. In Debaryomyces hansenii (strain ATCC 36239 / CBS 767 / BCRC 21394 / JCM 1990 / NBRC 0083 / IGC 2968) (Yeast), this protein is mRNA cap guanine-N(7) methyltransferase (ABD1).